Consider the following 387-residue polypeptide: MSRFFSTRQAVGGSTPQPDLYLLGAAVALMGLGWVMVGSASVAIADSRFGQPTYYLWRQGLFLLLGLVTAFGVWRIRLAFWEKLGPVMLLLGLGLLLLTLIPGIGVEVNGSRRWLALGPIRLQPSELAKLFMVIYLSGYLVRRSAEVRTIRGFLFPVGVFAMAGLLLLLEPDFGAVVVLFATLLGMLFLGGARLWHFLLLAALGGASLAALAWYSPYRMQRLTSFLDPWADPLNSGYQLTQALIAFGRGEWLGVGLGNSIQKLFYLPEAHTDFLYAVLAEELGLMGSLAVIALFVVFIYRVLLIGRAAERAGRTFGAHLAYGLGIWIGLQAFINLGVNMGVLPTKGLTLPLMSAGGSSSIVTCVAVALILRVDLETRFPKVARRSVK.

9 helical membrane passes run leucine 20 to alanine 40, leucine 61 to tryptophan 81, proline 86 to valine 106, threonine 149 to leucine 169, aspartate 172 to alanine 192, leucine 194 to tyrosine 214, leucine 284 to isoleucine 304, glycine 322 to leucine 342, and leucine 349 to isoleucine 369.

This sequence belongs to the SEDS family. FtsW subfamily.

It localises to the cell inner membrane. The catalysed reaction is [GlcNAc-(1-&gt;4)-Mur2Ac(oyl-L-Ala-gamma-D-Glu-L-Lys-D-Ala-D-Ala)](n)-di-trans,octa-cis-undecaprenyl diphosphate + beta-D-GlcNAc-(1-&gt;4)-Mur2Ac(oyl-L-Ala-gamma-D-Glu-L-Lys-D-Ala-D-Ala)-di-trans,octa-cis-undecaprenyl diphosphate = [GlcNAc-(1-&gt;4)-Mur2Ac(oyl-L-Ala-gamma-D-Glu-L-Lys-D-Ala-D-Ala)](n+1)-di-trans,octa-cis-undecaprenyl diphosphate + di-trans,octa-cis-undecaprenyl diphosphate + H(+). The protein operates within cell wall biogenesis; peptidoglycan biosynthesis. Functionally, peptidoglycan polymerase that is essential for cell division. The sequence is that of Probable peptidoglycan glycosyltransferase FtsW from Nitrosococcus halophilus (strain Nc4).